A 303-amino-acid chain; its full sequence is Diaminopimelate epimerase (303 aa).

The substrate site is built by Asn-15, Gln-47, and Asn-67. The active-site Proton donor is Cys-76. Residues 77-78, Asn-163, Asn-197, and 215-216 each bind substrate; these read GN and ER. The Proton acceptor role is filled by Cys-224. Position 225–226 (225–226) interacts with substrate; that stretch reads GS. Positions 279–303 are disordered; sequence DPATGEWSRDTQGLQGSGNADRGTA.

It belongs to the diaminopimelate epimerase family. As to quaternary structure, homodimer.

The protein localises to the cytoplasm. The enzyme catalyses (2S,6S)-2,6-diaminopimelate = meso-2,6-diaminopimelate. It participates in amino-acid biosynthesis; L-lysine biosynthesis via DAP pathway; DL-2,6-diaminopimelate from LL-2,6-diaminopimelate: step 1/1. Catalyzes the stereoinversion of LL-2,6-diaminopimelate (L,L-DAP) to meso-diaminopimelate (meso-DAP), a precursor of L-lysine and an essential component of the bacterial peptidoglycan. The chain is Diaminopimelate epimerase from Brucella canis (strain ATCC 23365 / NCTC 10854 / RM-666).